The primary structure comprises 201 residues: dITP/XTP pyrophosphatase (201 aa).

A substrate-binding site is contributed by 8–13; it reads TTNENK. The Proton acceptor role is filled by D68. D68 is a binding site for Mg(2+). Residues S69, 155-158, K177, and 182-183 each bind substrate; these read FGYD and HR.

It belongs to the HAM1 NTPase family. As to quaternary structure, homodimer. The cofactor is Mg(2+).

The enzyme catalyses XTP + H2O = XMP + diphosphate + H(+). It catalyses the reaction dITP + H2O = dIMP + diphosphate + H(+). The catalysed reaction is ITP + H2O = IMP + diphosphate + H(+). Pyrophosphatase that catalyzes the hydrolysis of nucleoside triphosphates to their monophosphate derivatives, with a high preference for the non-canonical purine nucleotides XTP (xanthosine triphosphate), dITP (deoxyinosine triphosphate) and ITP. Seems to function as a house-cleaning enzyme that removes non-canonical purine nucleotides from the nucleotide pool, thus preventing their incorporation into DNA/RNA and avoiding chromosomal lesions. The polypeptide is dITP/XTP pyrophosphatase (Borreliella burgdorferi (strain ATCC 35210 / DSM 4680 / CIP 102532 / B31) (Borrelia burgdorferi)).